The primary structure comprises 395 residues: MAEEPTYTTEQVDELIHAGLGTVDFFLSRPIDAQSSLGKGSIPPGVTAVLTSAAETKSKPVAAGPVKPRRKKVISNTTPYTIADNIPPEKLPINTPIPNPLLPLARPHGKMTDIDIVTGNITEGSYKGVELAKLGKQTLLTRFTSNEPVSSAGSAQDPNFKRGGELIEKEQEATIGENGVLHGSEIRSKSSSGVIPGVPQSRPQLASSPAHADPAPASAENVKEIIELLKGLDLRLQTVEGKVDKILATSATIINLKNEMTSLKASVATMEGMITTIKIMDPSTPTNVPVEEIRKSLHNVPVVIAGPTSGGFTAEQVILISMDELARPTLSSTKRITRKPESKKDLTGIKLTLMQLANDCISRPDTKTEFVTKIQAATTESQLNEIKRSIIRSAI.

Residues 178–217 (NGVLHGSEIRSKSSSGVIPGVPQSRPQLASSPAHADPAPA) form a disordered region. The span at 206-217 (ASSPAHADPAPA) shows a compositional bias: low complexity. The tract at residues 220–283 (ENVKEIIELL…ITTIKIMDPS (64 aa)) is multimerization.

The protein belongs to the rubulavirus/avulavirus P protein family. As to quaternary structure, homotetramer. Interacts (via multimerization domain) with polymerase L; this interaction forms the polymerase L-P complex. Interacts (via N-terminus) with N0 (via Ncore); this interaction allows P to chaperon N0 to avoid N polymerization before encapsidation. Interacts (via C-terminus) with N-RNA template; this interaction positions the polymerase on the template for both transcription and replication. Interacts with host ARHGAP26; this interaction promotes host RHOA activation. Interacts with host KPNA1 and KPNA6.

It localises to the host cytoplasm. Its function is as follows. Essential cofactor of the RNA polymerase L that plays a central role in the transcription and replication by forming the polymerase complex with RNA polymerase L and recruiting L to the genomic N-RNA template for RNA synthesis. Also plays a central role in the encapsidation of nascent RNA chains by forming the encapsidation complex with the nucleocapsid protein N (N-P complex). Acts as a chaperone for newly synthesized free N protein, so-called N0, allowing encapsidation of nascent RNA chains during replication. The nucleoprotein protein N prevents excessive phosphorylation of P, which leads to down-regulation of viral transcription/ replication. Participates, together with N, in the formation of viral factories (viroplasms), which are large inclusions in the host cytoplasm where replication takes place. Also plays a role in viral growth by promoting host RHOA activation and thus actin formation via ARHGAP26 inhibition. This chain is Phosphoprotein (P/V), found in Homo sapiens (Human).